Reading from the N-terminus, the 1031-residue chain is Beta-galactosidase (1031 aa).

Residues Asn98 and Asp197 each coordinate substrate. Asp197 is a Na(+) binding site. Mg(2+) contacts are provided by Glu412, His414, and Glu457. Residues Glu457 and Glu533–His536 contribute to the substrate site. Glu457 (proton donor) is an active-site residue. Glu533 (nucleophile) is an active-site residue. Asn593 is a binding site for Mg(2+). Na(+)-binding residues include Phe597 and Asp600. Residues Asp600 and Trp1005 each coordinate substrate.

This sequence belongs to the glycosyl hydrolase 2 family. As to quaternary structure, homotetramer. Requires Mg(2+) as cofactor. It depends on Na(+) as a cofactor.

The catalysed reaction is Hydrolysis of terminal non-reducing beta-D-galactose residues in beta-D-galactosides.. The protein is Beta-galactosidase of Oenococcus oeni (strain ATCC BAA-331 / PSU-1).